Reading from the N-terminus, the 305-residue chain is Suppressor of activated egl-4 protein 2 (305 aa).

The tract at residues 138–168 (KRGYESDSSDVSGVSHCSDAKRRRGRPRKDE) is disordered. The a.T hook DNA-binding region spans 158–170 (KRRRGRPRKDEEA).

Interacts with phosphorylated egl-4. May interact with itself. May be a component of a histone deacetylase complex containing saeg-2, saeg-1 and hda-2. As to expression, ubiquitously expressed.

The protein resides in the nucleus. Its function is as follows. As a likely component of a histone deacetylase complex, together with saeg-1 and hda-2, functions downstream of the cAMP-dependent kinase egl-4 to regulate the expression of genes required for egg-laying and foraging. The chain is Suppressor of activated egl-4 protein 2 from Caenorhabditis elegans.